The sequence spans 263 residues: Uridylate kinase (263 aa).

29-32 (KVSG) lines the ATP pocket. Residue G71 coordinates UMP. ATP is bound by residues G72 and R76. UMP is bound by residues D91 and 152–159 (TGNPFFTT). 4 residues coordinate ATP: T179, Q180, Y185, and D188.

It belongs to the UMP kinase family. As to quaternary structure, homohexamer.

The protein localises to the cytoplasm. The enzyme catalyses UMP + ATP = UDP + ADP. It participates in pyrimidine metabolism; CTP biosynthesis via de novo pathway; UDP from UMP (UMPK route): step 1/1. With respect to regulation, inhibited by UTP. In terms of biological role, catalyzes the reversible phosphorylation of UMP to UDP. This chain is Uridylate kinase, found in Maricaulis maris (strain MCS10) (Caulobacter maris).